Reading from the N-terminus, the 295-residue chain is Ribosomal RNA small subunit methyltransferase A (295 aa).

6 residues coordinate S-adenosyl-L-methionine: asparagine 33, valine 35, glycine 60, glutamate 81, aspartate 111, and asparagine 129.

It belongs to the class I-like SAM-binding methyltransferase superfamily. rRNA adenine N(6)-methyltransferase family. RsmA subfamily.

The protein localises to the cytoplasm. It carries out the reaction adenosine(1518)/adenosine(1519) in 16S rRNA + 4 S-adenosyl-L-methionine = N(6)-dimethyladenosine(1518)/N(6)-dimethyladenosine(1519) in 16S rRNA + 4 S-adenosyl-L-homocysteine + 4 H(+). In terms of biological role, specifically dimethylates two adjacent adenosines (A1518 and A1519) in the loop of a conserved hairpin near the 3'-end of 16S rRNA in the 30S particle. May play a critical role in biogenesis of 30S subunits. The polypeptide is Ribosomal RNA small subunit methyltransferase A (Streptomyces avermitilis (strain ATCC 31267 / DSM 46492 / JCM 5070 / NBRC 14893 / NCIMB 12804 / NRRL 8165 / MA-4680)).